Here is a 302-residue protein sequence, read N- to C-terminus: uncharacterized protein (302 aa).

A run of 9 helical transmembrane segments spans residues 1-21 (MSWI…LGVI), 33-53 (SLLF…YIYY), 67-87 (FLIE…IFQF), 101-121 (FGII…IILI), 124-144 (FSWL…KTFY), 185-205 (YVTP…VFAI), 220-240 (IIYT…FCLA), 253-273 (LALI…IAIP), and 274-294 (AYIS…ASVI).

It belongs to the TerC family.

The protein resides in the cell membrane. This is an uncharacterized protein from Rickettsia bellii (strain RML369-C).